We begin with the raw amino-acid sequence, 160 residues long: Eukaryotic translation initiation factor 5A (160 aa).

Residues 1–10 (MSDDDHHFES) show a composition bias toward basic and acidic residues. A disordered region spans residues 1 to 23 (MSDDDHHFESSADAGASKTYPQQ). Lys52 is modified (hypusine).

Belongs to the eIF-5A family. In terms of processing, lys-52 undergoes hypusination, a unique post-translational modification that consists in the addition of a butylamino group from spermidine to lysine side chain, leading to the formation of the unusual amino acid hypusine. eIF-5As are the only known proteins to undergo this modification, which is essential for their function.

Functionally, translation factor that promotes translation elongation and termination, particularly upon ribosome stalling at specific amino acid sequence contexts. Binds between the exit (E) and peptidyl (P) site of the ribosome and promotes rescue of stalled ribosome: specifically required for efficient translation of polyproline-containing peptides as well as other motifs that stall the ribosome. Acts as a ribosome quality control (RQC) cofactor by joining the RQC complex to facilitate peptidyl transfer during CAT tailing step. This is Eukaryotic translation initiation factor 5A from Dianthus caryophyllus (Carnation).